The following is a 446-amino-acid chain: Mannan endo-1,6-alpha-mannosidase DCW1 (446 aa).

The first 18 residues, 1–18 (MRLVTLLSGLVSLVSVFG), serve as a signal peptide directing secretion. N-linked (GlcNAc...) asparagine glycans are attached at residues N31, N81, N106, N200, N222, N237, N262, N278, N285, N334, N391, and N397. The disordered stretch occupies residues 389-408 (PYNATNGGNSTGDGAAGTKP). S422 is lipidated: GPI-anchor amidated serine. Residues 423–446 (RAGAGIITAIIGISIIACALWLVY) constitute a propeptide, removed in mature form.

This sequence belongs to the glycosyl hydrolase 76 family.

The protein resides in the secreted. It is found in the cell wall. Its subcellular location is the cell membrane. It carries out the reaction Random hydrolysis of (1-&gt;6)-alpha-D-mannosidic linkages in unbranched (1-&gt;6)-mannans.. Functionally, required for normal synthesis of the cell wall. This is Mannan endo-1,6-alpha-mannosidase DCW1 (DCW1) from Candida glabrata (strain ATCC 2001 / BCRC 20586 / JCM 3761 / NBRC 0622 / NRRL Y-65 / CBS 138) (Yeast).